The primary structure comprises 514 residues: Type-2 serine--tRNA ligase (514 aa).

Residue Ala313 coordinates L-serine. A Zn(2+)-binding site is contributed by Cys315. Arg344 serves as a coordination point for L-serine. ATP-binding positions include 344 to 346 (RWE) and 355 to 356 (RV). An L-serine-binding site is contributed by 361-363 (RGE). Residues Glu363 and Cys470 each contribute to the Zn(2+) site. Arg477 is a binding site for ATP.

It belongs to the class-II aminoacyl-tRNA synthetase family. Type-2 seryl-tRNA synthetase subfamily. In terms of assembly, homodimer. Zn(2+) is required as a cofactor.

Its subcellular location is the cytoplasm. It catalyses the reaction tRNA(Ser) + L-serine + ATP = L-seryl-tRNA(Ser) + AMP + diphosphate + H(+). The enzyme catalyses tRNA(Sec) + L-serine + ATP = L-seryl-tRNA(Sec) + AMP + diphosphate + H(+). It functions in the pathway aminoacyl-tRNA biosynthesis; selenocysteinyl-tRNA(Sec) biosynthesis; L-seryl-tRNA(Sec) from L-serine and tRNA(Sec): step 1/1. Catalyzes the attachment of serine to tRNA(Ser). Is also able to aminoacylate tRNA(Sec) with serine, to form the misacylated tRNA L-seryl-tRNA(Sec), which will be further converted into selenocysteinyl-tRNA(Sec). The chain is Type-2 serine--tRNA ligase from Methanococcus maripaludis (strain C5 / ATCC BAA-1333).